The primary structure comprises 737 residues: Catalase-peroxidase (737 aa).

Residues 1 to 32 (MSKENMSNEGKCPFNHGAAGTNQSSGRGTSNK) are disordered. Polar residues predominate over residues 20-32 (GTNQSSGRGTSNK). The tryptophyl-tyrosyl-methioninium (Trp-Tyr) (with M-252) cross-link spans 103–226 (WHSAGTYRTA…LAAVQMGLIY (124 aa)). The Proton acceptor role is filled by H104. The tryptophyl-tyrosyl-methioninium (Tyr-Met) (with W-103) cross-link spans 226–252 (YVNPEGPEGKPDTLASARDIRDTFGRM). H267 is a binding site for heme b.

Belongs to the peroxidase family. Peroxidase/catalase subfamily. As to quaternary structure, homodimer or homotetramer. Heme b is required as a cofactor. In terms of processing, formation of the three residue Trp-Tyr-Met cross-link is important for the catalase, but not the peroxidase activity of the enzyme.

The catalysed reaction is H2O2 + AH2 = A + 2 H2O. It catalyses the reaction 2 H2O2 = O2 + 2 H2O. Functionally, bifunctional enzyme with both catalase and broad-spectrum peroxidase activity. This chain is Catalase-peroxidase, found in Marinomonas sp. (strain MWYL1).